We begin with the raw amino-acid sequence, 210 residues long: FMN-dependent NADH:quinone oxidoreductase 8 (210 aa).

FMN contacts are provided by residues Ser-10 and 16 to 18 (SIS).

It belongs to the azoreductase type 1 family. Homodimer. It depends on FMN as a cofactor.

The enzyme catalyses 2 a quinone + NADH + H(+) = 2 a 1,4-benzosemiquinone + NAD(+). It catalyses the reaction N,N-dimethyl-1,4-phenylenediamine + anthranilate + 2 NAD(+) = 2-(4-dimethylaminophenyl)diazenylbenzoate + 2 NADH + 2 H(+). Quinone reductase that provides resistance to thiol-specific stress caused by electrophilic quinones. In terms of biological role, also exhibits azoreductase activity. Catalyzes the reductive cleavage of the azo bond in aromatic azo compounds to the corresponding amines. This chain is FMN-dependent NADH:quinone oxidoreductase 8, found in Burkholderia lata (strain ATCC 17760 / DSM 23089 / LMG 22485 / NCIMB 9086 / R18194 / 383).